We begin with the raw amino-acid sequence, 292 residues long: Elongation factor Ts (292 aa).

Residues 80–83 are involved in Mg(2+) ion dislocation from EF-Tu; sequence TDFV.

This sequence belongs to the EF-Ts family.

It is found in the cytoplasm. Associates with the EF-Tu.GDP complex and induces the exchange of GDP to GTP. It remains bound to the aminoacyl-tRNA.EF-Tu.GTP complex up to the GTP hydrolysis stage on the ribosome. This Cupriavidus taiwanensis (strain DSM 17343 / BCRC 17206 / CCUG 44338 / CIP 107171 / LMG 19424 / R1) (Ralstonia taiwanensis (strain LMG 19424)) protein is Elongation factor Ts.